A 341-amino-acid chain; its full sequence is Protein huluwa (341 aa).

At 1 to 36 (MVTLSPAYLPSDGGTQAASAAPSVEENWVVQPSLTL) the chain is on the extracellular side. The helical transmembrane segment at 37–57 (LVLLLVPCVLLLFFLNCFLLF) threads the bilayer. Residues 58–341 (HRLPAFSLRK…PMMCSKQYWI (284 aa)) lie on the Cytoplasmic side of the membrane. A VPPNSP motif motif is present at residues 206 to 211 (VPPNTP).

Belongs to the huluwa family. Interacts with axin1; leading to promote the tankyrase-mediated degradation of axin. Interacts with axin2; leading to promote the tankyrase-mediated degradation of axin.

It is found in the cell membrane. Key maternal determinant of the dorsal organizer and body axis formation in vertebrates that acts by promoting stabilization of beta-catenin (ctnnb1). Localizes on the plasma membrane of the future dorsal blastomeres in early blastulas and binds to and promotes the tankyrase-mediated degradation of axin (axin1 and axin2). Axin degradation results in stabilization and nuclear translocation of beta-catenin (ctnnb1) for activating organizer-specific target gene expression. This chain is Protein huluwa, found in Xenopus laevis (African clawed frog).